A 360-amino-acid chain; its full sequence is MKWKKSLAGLSSYKPGKREEEVMAELGLTKITKLSSNENPLGTSKKVAAIQANSSVETEIYPDGWASSLRKEVADFYQLEEEELIFTAGVDELIELLTRVLLDTTTNTVMATPTFVQYRQNALIEGAEVREIPLLQDGEHDLEGMLNAIDEKTTIVWICNPNNPTGNYIELADIQAFLDRVPSDVLVVLDEAYIEYVTPQPEKHEKLVRTYKNLIITRTFSKIYGLASARVGYGIADKEIIRQLNIVRPPFNTTSIGQKLAIEAIKDQAFIGECRTSNANGIKQYEAFAKRFEKVKLYPANGNFVLIDLGIEAGTIFSYLEKNGYITRSGAALGFPTAVRITIGKEEDNSAVIALLEKLL.

Lys222 carries the post-translational modification N6-(pyridoxal phosphate)lysine.

The protein belongs to the class-II pyridoxal-phosphate-dependent aminotransferase family. Histidinol-phosphate aminotransferase subfamily. In terms of assembly, homodimer. Pyridoxal 5'-phosphate serves as cofactor.

It catalyses the reaction L-histidinol phosphate + 2-oxoglutarate = 3-(imidazol-4-yl)-2-oxopropyl phosphate + L-glutamate. It functions in the pathway amino-acid biosynthesis; L-histidine biosynthesis; L-histidine from 5-phospho-alpha-D-ribose 1-diphosphate: step 7/9. This is Histidinol-phosphate aminotransferase from Listeria innocua serovar 6a (strain ATCC BAA-680 / CLIP 11262).